A 577-amino-acid polypeptide reads, in one-letter code: MRASRFFISTLKEAPSDAEIVSHKLMMRAGMIKRLGSGIYTYMPIGLRVIRKVEAIVREEMNRAHAIELLMPLVQPAELWQETGRWDKMGPELMRVKDRHGREYAIQPTSEEVVTDVVRSEIKSYRQLPLNFYHIQTKFRDERRPRFGLMRGREFTMKDAYSFDRDAEGLKRSYQIMFDAYVKIFNRFGLQFRAVAADNGAIGGSGSHEFHVIADTGEDAIVYCPTSDYAANMEAAEAIAPAVPRAAATQTLTKTATPGKAKCEDVAALLNLPLAQTVKSIVLTVEKEDKGVVSKEIWLLLLRGDHELNEVKAAKIPGLTDYRFANEAEIVEWFGTPPGYLGPINTKKPVKVVVDRTVAAMSDFVCGANEVDFHFTGVNWGRDLPEAMVLDLRNVVEGDPSPDGKGVLAIQRGIEVGHVFQLGTAYSEKMKATYLDENGKPQLIQMGCYGIGVTRIVGAAIEQNFDDRGIIWPAALAPFEVVLCPMGYDRSESVKTETDKLYEALLAAGVDVILDDRGERPGAMFADWELIGAPHRIVIGERGLKEGALEYKGRRDADATAVALDDMLAFVQARLAA.

Belongs to the class-II aminoacyl-tRNA synthetase family. ProS type 1 subfamily. Homodimer.

It localises to the cytoplasm. The enzyme catalyses tRNA(Pro) + L-proline + ATP = L-prolyl-tRNA(Pro) + AMP + diphosphate. In terms of biological role, catalyzes the attachment of proline to tRNA(Pro) in a two-step reaction: proline is first activated by ATP to form Pro-AMP and then transferred to the acceptor end of tRNA(Pro). As ProRS can inadvertently accommodate and process non-cognate amino acids such as alanine and cysteine, to avoid such errors it has two additional distinct editing activities against alanine. One activity is designated as 'pretransfer' editing and involves the tRNA(Pro)-independent hydrolysis of activated Ala-AMP. The other activity is designated 'posttransfer' editing and involves deacylation of mischarged Ala-tRNA(Pro). The misacylated Cys-tRNA(Pro) is not edited by ProRS. In Herminiimonas arsenicoxydans, this protein is Proline--tRNA ligase.